The following is a 953-amino-acid chain: Lysosomal alpha-glucosidase (953 aa).

Positions 1 to 27 (MNIRKPLCSNSVVGACTLVSLTTAVIL) are cleaved as a signal peptide. A propeptide spanning residues 28–69 (GHLMLRELMLLPQDLHESSSGLWKTYRPHHQESYEPAPLHIQ) is cleaved from the precursor. Positions 80–131 (TQCDVTPNSRFDCAPDKGITQEQCEARGCCWVPAGQVLNGPVMGQPWCFFPP) constitute a P-type domain. Intrachain disulfides connect C82–C109, C92–C108, and C103–C127. 3 N-linked (GlcNAc...) asparagine glycosylation sites follow: N140, N233, and N390. D404 is a binding site for substrate. N-linked (GlcNAc...) asparagine glycosylation occurs at N470. The active-site Nucleophile is the D518. Residue E521 is part of the active site. A disulfide bridge links C533 with C558. Residues R600 and D616 each coordinate substrate. C647 and C658 form a disulfide bridge. N652 carries N-linked (GlcNAc...) asparagine glycosylation. Position 674 (H674) interacts with substrate. N-linked (GlcNAc...) asparagine glycans are attached at residues N883 and N926.

This sequence belongs to the glycosyl hydrolase 31 family.

The protein resides in the lysosome. It localises to the lysosome membrane. The catalysed reaction is Hydrolysis of terminal, non-reducing (1-&gt;4)-linked alpha-D-glucose residues with release of alpha-D-glucose.. In terms of biological role, essential for the degradation of glycogen in lysosomes. Has highest activity on alpha-1,4-linked glycosidic linkages, but can also hydrolyze alpha-1,6-linked glucans. The protein is Lysosomal alpha-glucosidase (Gaa) of Rattus norvegicus (Rat).